A 238-amino-acid polypeptide reads, in one-letter code: Ubiquinone biosynthesis O-methyltransferase (238 aa).

S-adenosyl-L-methionine-binding residues include Arg39, Gly58, Asp79, and Met123.

This sequence belongs to the methyltransferase superfamily. UbiG/COQ3 family.

The enzyme catalyses a 3-demethylubiquinol + S-adenosyl-L-methionine = a ubiquinol + S-adenosyl-L-homocysteine + H(+). It carries out the reaction a 3-(all-trans-polyprenyl)benzene-1,2-diol + S-adenosyl-L-methionine = a 2-methoxy-6-(all-trans-polyprenyl)phenol + S-adenosyl-L-homocysteine + H(+). It participates in cofactor biosynthesis; ubiquinone biosynthesis. Functionally, O-methyltransferase that catalyzes the 2 O-methylation steps in the ubiquinone biosynthetic pathway. The sequence is that of Ubiquinone biosynthesis O-methyltransferase from Hahella chejuensis (strain KCTC 2396).